We begin with the raw amino-acid sequence, 460 residues long: Bifunctional protein GlmU (460 aa).

The tract at residues 1 to 229 is pyrophosphorylase; that stretch reads MTNYAIILAA…FNESLGVNDR (229 aa). UDP-N-acetyl-alpha-D-glucosamine contacts are provided by residues 8 to 11, lysine 22, glutamine 72, and 77 to 78; these read LAAG and GT. A Mg(2+)-binding site is contributed by aspartate 102. Glycine 139, glutamate 154, asparagine 169, and asparagine 227 together coordinate UDP-N-acetyl-alpha-D-glucosamine. Residue asparagine 227 participates in Mg(2+) binding. The linker stretch occupies residues 230 to 250; that stretch reads VALATAETVMRQRITQKHMVN. Residues 251–460 are N-acetyltransferase; sequence GVTFQNPETV…RLAHHPSRSK (210 aa). Residues arginine 332 and lysine 350 each coordinate UDP-N-acetyl-alpha-D-glucosamine. Catalysis depends on histidine 362, which acts as the Proton acceptor. Tyrosine 365 and asparagine 376 together coordinate UDP-N-acetyl-alpha-D-glucosamine. Residues alanine 379, 385–386, serine 404, alanine 422, and arginine 439 contribute to the acetyl-CoA site; that span reads NY.

It in the N-terminal section; belongs to the N-acetylglucosamine-1-phosphate uridyltransferase family. In the C-terminal section; belongs to the transferase hexapeptide repeat family. As to quaternary structure, homotrimer. Requires Mg(2+) as cofactor.

The protein resides in the cytoplasm. It carries out the reaction alpha-D-glucosamine 1-phosphate + acetyl-CoA = N-acetyl-alpha-D-glucosamine 1-phosphate + CoA + H(+). It catalyses the reaction N-acetyl-alpha-D-glucosamine 1-phosphate + UTP + H(+) = UDP-N-acetyl-alpha-D-glucosamine + diphosphate. It functions in the pathway nucleotide-sugar biosynthesis; UDP-N-acetyl-alpha-D-glucosamine biosynthesis; N-acetyl-alpha-D-glucosamine 1-phosphate from alpha-D-glucosamine 6-phosphate (route II): step 2/2. The protein operates within nucleotide-sugar biosynthesis; UDP-N-acetyl-alpha-D-glucosamine biosynthesis; UDP-N-acetyl-alpha-D-glucosamine from N-acetyl-alpha-D-glucosamine 1-phosphate: step 1/1. Its pathway is bacterial outer membrane biogenesis; LPS lipid A biosynthesis. Functionally, catalyzes the last two sequential reactions in the de novo biosynthetic pathway for UDP-N-acetylglucosamine (UDP-GlcNAc). The C-terminal domain catalyzes the transfer of acetyl group from acetyl coenzyme A to glucosamine-1-phosphate (GlcN-1-P) to produce N-acetylglucosamine-1-phosphate (GlcNAc-1-P), which is converted into UDP-GlcNAc by the transfer of uridine 5-monophosphate (from uridine 5-triphosphate), a reaction catalyzed by the N-terminal domain. The protein is Bifunctional protein GlmU of Streptococcus pyogenes serotype M12 (strain MGAS9429).